Consider the following 1018-residue polypeptide: Ubiquitin carboxyl-terminal hydrolase 35 (1018 aa).

Residues 441 to 926 (IGLINLGNTC…TAYVLFYRQR (486 aa)) form the USP domain. Cys450 functions as the Nucleophile in the catalytic mechanism. 2 disordered regions span residues 544–566 (QKLK…STSV) and 610–757 (RLGS…GSEG). Residues 552-561 (PSPPEEPPAP) show a composition bias toward pro residues. Position 613 is a phosphoserine (Ser613). Basic and acidic residues-rich tracts occupy residues 673-691 (QEER…TEKE), 699-709 (STRGEGEREKE), and 718-728 (KVEKETEKEAE). Residue His862 is the Proton acceptor of the active site. Residues 984–1011 (HWGRGFDEDKDEDEGSPGGCNPAGGNGG) are disordered. The segment covering 999–1011 (SPGGCNPAGGNGG) has biased composition (gly residues).

Belongs to the peptidase C19 family. As to quaternary structure, homodimer (via C-terminal region). Interacts with HSP90AA1. In terms of processing, ubiquitinated by CHIP/STUB1 in an HSP90-dependent manner; leading to proteasomal degradation. This ubiquitination can be reversed through auto-deubiquitinating activity. Expressed in testis, pancreas and skeletal muscle.

It is found in the cytoplasm. Its subcellular location is the mitochondrion. It catalyses the reaction Thiol-dependent hydrolysis of ester, thioester, amide, peptide and isopeptide bonds formed by the C-terminal Gly of ubiquitin (a 76-residue protein attached to proteins as an intracellular targeting signal).. In terms of biological role, deubiquitinase that plays a role in different processes including cell cycle regulation, mitophagy or endoplasmic reticulum stress. Inhibits TNFalpha-induced NF-kappa-B activation through stabilizing TNIP2 protein via deubiquitination. Plays an essential role during mitosis by deubiquitinating and thereby regulating the levels of Aurora B/AURKB protein. In addition, regulates the protein levels of other key component of the chromosomal passenger complex (CPC) such as survivin/BIRC5 or Borealin/CDCA8 by enhancing their stability. Regulates the degradation of mitochondria through the process of autophagy termed mitophagy. This is Ubiquitin carboxyl-terminal hydrolase 35 (USP35) from Homo sapiens (Human).